The primary structure comprises 445 residues: DNA repair protein RadA (445 aa).

The C4-type zinc finger occupies Cys10–Cys27. Gly90 to Ser97 is an ATP binding site. The RadA KNRFG motif signature appears at Lys249–Gly253. Positions Glu348–Lys445 are lon-protease-like.

The protein belongs to the RecA family. RadA subfamily.

DNA-dependent ATPase involved in processing of recombination intermediates, plays a role in repairing DNA breaks. Stimulates the branch migration of RecA-mediated strand transfer reactions, allowing the 3' invading strand to extend heteroduplex DNA faster. Binds ssDNA in the presence of ADP but not other nucleotides, has ATPase activity that is stimulated by ssDNA and various branched DNA structures, but inhibited by SSB. Does not have RecA's homology-searching function. This chain is DNA repair protein RadA, found in Rickettsia typhi (strain ATCC VR-144 / Wilmington).